A 454-amino-acid polypeptide reads, in one-letter code: tRNA modification GTPase MnmE (454 aa).

Positions 23, 80, and 120 each coordinate (6S)-5-formyl-5,6,7,8-tetrahydrofolate. Positions 216–377 (GMKVVIAGRP…LRDHLKQSMG (162 aa)) constitute a TrmE-type G domain. Asn226 lines the K(+) pocket. GTP is bound by residues 226–231 (NAGKSS), 245–251 (TDIAGTT), 270–273 (DTAG), 335–338 (NKAD), and 358–360 (SAR). Residue Ser230 coordinates Mg(2+). K(+) contacts are provided by Thr245, Ile247, and Thr250. Residue Thr251 coordinates Mg(2+). Lys454 lines the (6S)-5-formyl-5,6,7,8-tetrahydrofolate pocket.

This sequence belongs to the TRAFAC class TrmE-Era-EngA-EngB-Septin-like GTPase superfamily. TrmE GTPase family. Homodimer. Heterotetramer of two MnmE and two MnmG subunits. It depends on K(+) as a cofactor.

Its subcellular location is the cytoplasm. Exhibits a very high intrinsic GTPase hydrolysis rate. Involved in the addition of a carboxymethylaminomethyl (cmnm) group at the wobble position (U34) of certain tRNAs, forming tRNA-cmnm(5)s(2)U34. The sequence is that of tRNA modification GTPase MnmE from Yersinia pestis bv. Antiqua (strain Antiqua).